A 217-amino-acid polypeptide reads, in one-letter code: Protein-L-isoaspartate O-methyltransferase 2 (217 aa).

The active site involves Ser-64.

Belongs to the methyltransferase superfamily. L-isoaspartyl/D-aspartyl protein methyltransferase family.

It localises to the cytoplasm. It catalyses the reaction [protein]-L-isoaspartate + S-adenosyl-L-methionine = [protein]-L-isoaspartate alpha-methyl ester + S-adenosyl-L-homocysteine. Its function is as follows. Catalyzes the methyl esterification of L-isoaspartyl residues in peptides and proteins that result from spontaneous decomposition of normal L-aspartyl and L-asparaginyl residues. It plays a role in the repair and/or degradation of damaged proteins. The sequence is that of Protein-L-isoaspartate O-methyltransferase 2 from Rhodopseudomonas palustris (strain HaA2).